Consider the following 53-residue polypeptide: Snake venom serine protease LmrSP-4 (53 aa).

An intrachain disulfide couples cysteine 26 to cysteine 42. Residue histidine 41 is the Charge relay system of the active site.

In terms of assembly, monomer. N-glycosylated. Expressed by the venom gland.

Its subcellular location is the secreted. Inhibited by the small molecule serine protease inhibitors phenylmethylsulfonyl fluoride (PMSF) and benzamidine. Snake venom serine protease that has fibrinogenolytic activity. Hydrolyzes the alpha-chain of fibrinogen (FGA), without affecting the beta- and the gamma-chains. Also displays hydrolytic activity towards S-2302 (plasma kallikrein substrate) and S-2251 (substrate for plasmin), but has no hydrolytic activity with S-2238 (thrombin substrate) or S-2222 (factor Xa). This chain is Snake venom serine protease LmrSP-4, found in Lachesis muta rhombeata (Bushmaster).